The sequence spans 559 residues: Potassium-transporting ATPase potassium-binding subunit (559 aa).

The next 12 membrane-spanning stretches (helical) occupy residues 5–25 (GFLL…PLGT), 63–83 (LLAI…LLML), 131–151 (VGLT…VFAL), 173–193 (ITLW…IQQG), 254–274 (VQML…GEVV), 282–302 (AILW…MWAE), 327–347 (FGIL…CGAV), 356–376 (ALGG…FGGV), 379–399 (GLYG…LMVG), 416–436 (MIAL…ALAM), 483–503 (LLLA…VMAI), and 525–545 (ALFI…TFIP).

The protein belongs to the KdpA family. As to quaternary structure, the system is composed of three essential subunits: KdpA, KdpB and KdpC.

It localises to the cell inner membrane. Part of the high-affinity ATP-driven potassium transport (or Kdp) system, which catalyzes the hydrolysis of ATP coupled with the electrogenic transport of potassium into the cytoplasm. This subunit binds the periplasmic potassium ions and delivers the ions to the membrane domain of KdpB through an intramembrane tunnel. The chain is Potassium-transporting ATPase potassium-binding subunit from Klebsiella pneumoniae (strain 342).